The following is a 213-amino-acid chain: Protein nullo (213 aa).

Blastoderm. Throughout the entire cortex of the embryo although the distribution is not uniform.

Its function is as follows. Actin-myosin network stability during cellularization. Might be involved in increasing actin-actin interactions or membrane-to-cytoskeleton attachments. nullo together with Sry-a and bnk may provide auxiliary functions, by acting both to stabilize a large and dynamic microfilament structure and regulate its functions. This chain is Protein nullo (nullo), found in Drosophila melanogaster (Fruit fly).